Reading from the N-terminus, the 577-residue chain is Proline--tRNA ligase (577 aa).

The protein belongs to the class-II aminoacyl-tRNA synthetase family. ProS type 1 subfamily. As to quaternary structure, homodimer.

The protein localises to the cytoplasm. It catalyses the reaction tRNA(Pro) + L-proline + ATP = L-prolyl-tRNA(Pro) + AMP + diphosphate. Functionally, catalyzes the attachment of proline to tRNA(Pro) in a two-step reaction: proline is first activated by ATP to form Pro-AMP and then transferred to the acceptor end of tRNA(Pro). As ProRS can inadvertently accommodate and process non-cognate amino acids such as alanine and cysteine, to avoid such errors it has two additional distinct editing activities against alanine. One activity is designated as 'pretransfer' editing and involves the tRNA(Pro)-independent hydrolysis of activated Ala-AMP. The other activity is designated 'posttransfer' editing and involves deacylation of mischarged Ala-tRNA(Pro). The misacylated Cys-tRNA(Pro) is not edited by ProRS. This is Proline--tRNA ligase from Herminiimonas arsenicoxydans.